The sequence spans 651 residues: Peptidoglycan D,D-transpeptidase MrdA (651 aa).

The chain crosses the membrane as a helical span at residues 30-50 (LVAFLGILLLTGVLFTNIYQL). Catalysis depends on Ser-338, which acts as the Acyl-ester intermediate.

Belongs to the transpeptidase family. MrdA subfamily.

The protein localises to the cell inner membrane. It carries out the reaction Preferential cleavage: (Ac)2-L-Lys-D-Ala-|-D-Ala. Also transpeptidation of peptidyl-alanyl moieties that are N-acyl substituents of D-alanine.. Its pathway is cell wall biogenesis; peptidoglycan biosynthesis. Functionally, catalyzes cross-linking of the peptidoglycan cell wall. In Haemophilus influenzae (strain ATCC 51907 / DSM 11121 / KW20 / Rd), this protein is Peptidoglycan D,D-transpeptidase MrdA.